Reading from the N-terminus, the 500-residue chain is Lysine--tRNA ligase (500 aa).

Mg(2+) contacts are provided by E410 and E417.

This sequence belongs to the class-II aminoacyl-tRNA synthetase family. In terms of assembly, homodimer. Requires Mg(2+) as cofactor.

It localises to the cytoplasm. It catalyses the reaction tRNA(Lys) + L-lysine + ATP = L-lysyl-tRNA(Lys) + AMP + diphosphate. The chain is Lysine--tRNA ligase from Mycoplasma capricolum subsp. capricolum (strain California kid / ATCC 27343 / NCTC 10154).